The chain runs to 577 residues: Proline--tRNA ligase (577 aa).

This sequence belongs to the class-II aminoacyl-tRNA synthetase family. ProS type 1 subfamily. In terms of assembly, homodimer.

Its subcellular location is the cytoplasm. The catalysed reaction is tRNA(Pro) + L-proline + ATP = L-prolyl-tRNA(Pro) + AMP + diphosphate. Catalyzes the attachment of proline to tRNA(Pro) in a two-step reaction: proline is first activated by ATP to form Pro-AMP and then transferred to the acceptor end of tRNA(Pro). As ProRS can inadvertently accommodate and process non-cognate amino acids such as alanine and cysteine, to avoid such errors it has two additional distinct editing activities against alanine. One activity is designated as 'pretransfer' editing and involves the tRNA(Pro)-independent hydrolysis of activated Ala-AMP. The other activity is designated 'posttransfer' editing and involves deacylation of mischarged Ala-tRNA(Pro). The misacylated Cys-tRNA(Pro) is not edited by ProRS. The polypeptide is Proline--tRNA ligase (Janthinobacterium sp. (strain Marseille) (Minibacterium massiliensis)).